We begin with the raw amino-acid sequence, 1433 residues long: Pleckstrin homology domain-containing family H member 1 (1433 aa).

A coiled-coil region spans residues 40 to 174 (NIRHLLAERM…QILMLQDKLQ (135 aa)). Disordered regions lie at residues 247–346 (DKAD…LSPP) and 552–634 (SSVP…TSSY). Positions 252 to 266 (PKSSQDGVDATSTVK) are enriched in polar residues. A compositionally biased stretch (basic and acidic residues) spans 279-299 (MRDRAMGGASDRDHSSDELNS). Over residues 308 to 318 (SSSSSSSSSSS) the composition is skewed to low complexity. Residues 332–343 (TPTPKSPPPVSL) are compositionally biased toward pro residues. The span at 557–567 (PDDDSGSEDDS) shows a compositional bias: acidic residues. Residues 568–578 (SSLASLHTSTL) show a composition bias toward low complexity. A compositionally biased stretch (polar residues) spans 597-606 (VSTSSISSES). PH domains follow at residues 643-737 (TLEK…NVLK) and 751-859 (KPTA…VAAG). The region spanning 896-1050 (FSKEGLRYPL…PSRMEILSIL (155 aa)) is the MyTH4 domain. In terms of domain architecture, FERM spans 1061–1392 (FSIPVHFMNN…SYINYWTSSL (332 aa)).

Critical component of the guidance pathway underlying endothelial cell migration and blood vessel patterning. Involved in mediating membrane localization of ephrin proteins, which have been shown to provide guidance cues for endothelial cell migration. This chain is Pleckstrin homology domain-containing family H member 1 (plekhh1), found in Danio rerio (Zebrafish).